A 565-amino-acid polypeptide reads, in one-letter code: MKRTVISSSNAYASKRSRLDIEHDFEQYHSLNKKYYPRPITRTGANQFNNKSRAKPMEIVEKLQKKQKTSFENVSTVMHWFRNDLRLYDNVGLYKSVALFQQLRQKNAKAKLYAVYVINEDDWRAHMDSGWKLMFIMGALKNLQQSLAELHIPLLLWEFHTPKSTLSNSKEFVEFFKEKCMNVSSGTGTIITANIEYQTDELYRDIRLLENEDHRLQLKYYHDSCIVAPGLITTDRGTNYSVFTPWYKKWVLYVNNYKKSTSEICHLHIIEPLKYNETFELKPFQYSLPDEFLQYIPKSKWCLPDVSEEAALSRLKDFLGTKSSKYNNEKDMLYLGGTSGLSVYITTGRISTRLIVNQAFQSCNGQIMSKALKDNSSTQNFIKEVAWRDFYRHCMCNWPYTSMGMPYRLDTLDIKWENNPVAFEKWCTGNTGIPIVDAIMRKLLYTGYINNRSRMITASFLSKNLLIDWRWGERWFMKHLIDGDSSSNVGGWGFCSSTGIDAQPYFRVFNMDIQAKKYDPQMIFVKQWVPELISSENKRPENYPKPLVDLKHSRERALKVYKDAM.

A Photolyase/cryptochrome alpha/beta domain is found at 75 to 226 (STVMHWFRND…QLKYYHDSCI (152 aa)). Residues Tyr326 and 338–342 (TSGLS) each bind FAD. Interaction with DNA regions lie at residues 384–391 (EVAWRDFY) and 451–452 (NR). An FAD-binding site is contributed by 482–484 (DGD). Gln514 is a DNA binding site.

This sequence belongs to the DNA photolyase class-1 family. In terms of assembly, monomer. FAD serves as cofactor. The cofactor is (6R)-5,10-methylene-5,6,7,8-tetrahydrofolate.

The protein resides in the nucleus. Its subcellular location is the mitochondrion. It carries out the reaction cyclobutadipyrimidine (in DNA) = 2 pyrimidine residues (in DNA).. In terms of biological role, involved in repair of UV radiation-induced DNA damage. Catalyzes the light-dependent monomerization (300-600 nm) of cyclobutyl pyrimidine dimers (in cis-syn configuration), which are formed between adjacent bases on the same DNA strand upon exposure to ultraviolet radiation. In Saccharomyces cerevisiae (strain ATCC 204508 / S288c) (Baker's yeast), this protein is Deoxyribodipyrimidine photo-lyase, mitochondrial (PHR1).